The chain runs to 85 residues: Beta-insect depressant toxin BmKITb (85 aa).

An N-terminal signal peptide occupies residues 1–21; the sequence is MKLFLLLVISASMLIDGLVNA. An LCN-type CS-alpha/beta domain is found at 22-82; sequence DGYIRGSNGC…TWKSESNTCG (61 aa). 4 cysteine pairs are disulfide-bonded: cysteine 31–cysteine 81, cysteine 35–cysteine 56, cysteine 42–cysteine 63, and cysteine 46–cysteine 65. Glycine 82 carries the glycine amide modification.

Expressed by the venom gland.

It is found in the secreted. Depressant insect beta-toxins cause a transient contraction paralysis followed by a slow flaccid paralysis. They bind voltage-independently at site-4 of sodium channels (Nav) and shift the voltage of activation toward more negative potentials thereby affecting sodium channel activation and promoting spontaneous and repetitive firing. However, this toxin has some characteristics of excitatory toxins such as bursts of activity after the membrane has been hyperpolarized. This toxin is active only on insects. This chain is Beta-insect depressant toxin BmKITb, found in Olivierus martensii (Manchurian scorpion).